Consider the following 97-residue polypeptide: Peptide YY (97 aa).

A signal peptide spans 1–28 (MVFVRRPWPALTTVLLALLVCLGALVDA). Serine 41 is modified (phosphoserine). A Tyrosine amide modification is found at tyrosine 64. Residues 65-97 (GKRDGPDTLLSKTFFPDGEDRPVRSRSEGPDLW) form a disordered region. The propeptide occupies 68 to 97 (DGPDTLLSKTFFPDGEDRPVRSRSEGPDLW). Residues 82 to 97 (GEDRPVRSRSEGPDLW) are compositionally biased toward basic and acidic residues.

Belongs to the NPY family. The peptide YY form is cleaved at Pro-30 by the prolyl endopeptidase FAP (seprase) activity (in vitro) to generate peptide YY(3-36).

It localises to the secreted. In terms of biological role, this gut peptide inhibits exocrine pancreatic secretion, has a vasoconstrictory action and inhibitis jejunal and colonic mobility. The protein is Peptide YY (PYY) of Homo sapiens (Human).